A 64-amino-acid chain; its full sequence is Large ribosomal subunit protein uL30 (64 aa).

The protein belongs to the universal ribosomal protein uL30 family. Part of the 50S ribosomal subunit.

This Rhodopseudomonas palustris (strain BisB18) protein is Large ribosomal subunit protein uL30.